A 442-amino-acid polypeptide reads, in one-letter code: Enolase 1 (442 aa).

Positions 73–140 (KLIAKEIVGY…YNYLGGFNAH (68 aa)) are binds human collagen. (2R)-2-phosphoglycerate is bound at residue Gln-163. Residue Glu-205 is the Proton donor of the active site. Mg(2+) is bound by residues Asp-242, Glu-290, and Asp-317. (2R)-2-phosphoglycerate is bound by residues Lys-342, Arg-371, Ser-372, and Lys-393. Lys-342 serves as the catalytic Proton acceptor.

The protein belongs to the enolase family. Requires Mg(2+) as cofactor.

It is found in the cytoplasm. It localises to the secreted. The protein resides in the cell surface. It catalyses the reaction (2R)-2-phosphoglycerate = phosphoenolpyruvate + H2O. It participates in carbohydrate degradation; glycolysis; pyruvate from D-glyceraldehyde 3-phosphate: step 4/5. Functionally, catalyzes the reversible conversion of 2-phosphoglycerate (2-PG) into phosphoenolpyruvate (PEP). It is essential for the degradation of carbohydrates via glycolysis. 'Moonlights' as a collagen receptor. Binds host (human) collagen, which may contribute to pathogenicity. This Lactiplantibacillus plantarum (strain ATCC BAA-793 / NCIMB 8826 / WCFS1) (Lactobacillus plantarum) protein is Enolase 1.